Reading from the N-terminus, the 191-residue chain is MNLILFGPPAAGKGTQAKRLVTERGMVQLSTGDMLRAAIASGSELGQRVKGVLDRGELVTDEIVIALIEDRLPEAEAAGGAIFDGFPRTVAQAEALDKMLAARGQKIDVVLRLKVDEPALIERIKKRFEEQGRPDDNPEVFVTRLAAYNAQTAPLLPYYEGQGKLTELDGMGTVEAVAASIDSALEPVAAG.

10–15 (AAGKGT) contributes to the ATP binding site. An NMP region spans residues 30 to 59 (STGDMLRAAIASGSELGQRVKGVLDRGELV). Residues Thr-31, Arg-36, 57–59 (ELV), 85–88 (GFPR), and Gln-92 contribute to the AMP site. The segment at 126 to 136 (KRFEEQGRPDD) is LID. Arg-127 contributes to the ATP binding site. AMP contacts are provided by Arg-133 and Arg-144. Gly-172 provides a ligand contact to ATP.

Belongs to the adenylate kinase family. As to quaternary structure, monomer.

The protein localises to the cytoplasm. The enzyme catalyses AMP + ATP = 2 ADP. It functions in the pathway purine metabolism; AMP biosynthesis via salvage pathway; AMP from ADP: step 1/1. Its function is as follows. Catalyzes the reversible transfer of the terminal phosphate group between ATP and AMP. Plays an important role in cellular energy homeostasis and in adenine nucleotide metabolism. This is Adenylate kinase from Caulobacter vibrioides (strain ATCC 19089 / CIP 103742 / CB 15) (Caulobacter crescentus).